The chain runs to 765 residues: Transient receptor potential cation channel subfamily V member 6 (765 aa).

Residues 1-367 (MGPLQGDGGP…SLKWKRYGRP (367 aa)) lie on the Cytoplasmic side of the membrane. 3 ANK repeats span residues 84-114 (IWES…KVHQ), 118-147 (MGET…ELVF), and 156-185 (EGQT…SVSA). The interaction with calmodulin stretch occupies residues 133-143 (EAAMVLMEAAP). Tyr-201 bears the Phosphotyrosine; by SRC mark. ANK repeat units follow at residues 202-231 (FGEH…DIRA), 235-277 (LGNT…LVPN), and 279-308 (QGLT…HTQW). A helical transmembrane segment spans residues 368–388 (YFCMLGAIYLLYIICFTMCCI). Residues 389–425 (YRPLKPRTNNRTSPRDNTLLQQKLLQEAYMTPKDDIR) lie on the Extracellular side of the membrane. N-linked (GlcNAc...) asparagine glycosylation is present at Asn-398. A helical membrane pass occupies residues 426 to 448 (LVGELVTVIGAIIILLVEVPDIF). Residues 449-463 (RMGVTRFFGQTILGG) lie on the Cytoplasmic side of the membrane. The helical transmembrane segment at 464–483 (PFHVLIITYAFMVLVTMVMR) threads the bilayer. At 484–489 (LISASG) the chain is on the extracellular side. The chain crosses the membrane as a helical span at residues 490–509 (EVVPMSFALVLGWCNVMYFA). The Cytoplasmic segment spans residues 510–529 (RGFQMLGPFTIMIQKMIFGD). Residues 530–552 (LMRFCWLMAVVILGFASAFYIIF) traverse the membrane as a helical segment. Topologically, residues 553–565 (QTEDPEELGHFYD) are extracellular. The pore-forming intramembrane region spans 566-585 (YPMALFSTFELFLTIIDGPA). The Selectivity filter signature appears at 581–585 (IDGPA). Ca(2+) is bound at residue Asp-582. The Extracellular portion of the chain corresponds to 586–596 (NYNVDLPFMYS). A helical transmembrane segment spans residues 597 to 617 (ITYAAFAIIATLLMLNLLIAM). At 618-765 (MGDTHWRVAH…EDGESWEYQI (148 aa)) the chain is on the cytoplasmic side. Positions 638-642 (VATTV) are interaction with S100A10. Positions 731-751 (SSANWERLRQGTLRRDLRGII) are interaction with calmodulin. Thr-742 is subject to Phosphothreonine; by PKC/PRKCA.

The protein belongs to the transient receptor (TC 1.A.4) family. TrpV subfamily. TRPV6 sub-subfamily. Homotetramer. Probably also forms heterotetramers with TRPV5. Interacts with TRPV5. Interacts with S100A10 and probably with the ANAX2-S100A10 heterotetramer. The interaction with S100A10 is required for the trafficking to the plasma membrane. Interacts with BSPRY. Interacts with TCAF1 and TCAF2 isoform 2. Interacts with calmodulin. In terms of processing, glycosylated. Post-translationally, phosphorylation at Tyr-201 by SRC leads to an increased calcium influx through the channel. Probably dephosphorylated at this site by PTPN1. Phosphorylation by PRKCA at the calmodulin binding site delays channel inactivation. In terms of tissue distribution, expressed at high levels in the gastrointestinal tract, including esophagus, stomach, duodenum, jejunum, ileum and colon, and in pancreas, placenta, prostate and salivary gland. Expressed at moderate levels in liver, kidney and testis. Expressed in trophoblasts of placenta villus trees (at protein level). Expressed in locally advanced prostate cancer, metastatic and androgen-insensitive prostatic lesions but not detected in healthy prostate tissue and benign prostatic hyperplasia.

It localises to the cell membrane. It catalyses the reaction Ca(2+)(in) = Ca(2+)(out). Its function is as follows. Calcium selective cation channel that mediates Ca(2+) uptake in various tissues, including the intestine. Important for normal Ca(2+) ion homeostasis in the body, including bone and skin. The channel is activated by low internal calcium level, probably including intracellular calcium store depletion, and the current exhibits an inward rectification. Inactivation includes both a rapid Ca(2+)-dependent and a slower Ca(2+)-calmodulin-dependent mechanism; the latter may be regulated by phosphorylation. In vitro, is slowly inhibited by Mg(2+) in a voltage-independent manner. Heteromeric assembly with TRPV5 seems to modify channel properties. TRPV5-TRPV6 heteromultimeric concatemers exhibit voltage-dependent gating. This chain is Transient receptor potential cation channel subfamily V member 6 (TRPV6), found in Homo sapiens (Human).